The following is a 352-amino-acid chain: Forkhead box protein D5 (352 aa).

2 disordered regions span residues 1–32 and 47–92; these read MSLS…LGED and HSEM…GKAK. Positions 20 to 32 are enriched in acidic residues; the sequence is SDEEDEIDILGED. The span at 73–82 shows a compositional bias: low complexity; that stretch reads ESEGGTSKDS. A DNA-binding region (fork-head) is located at residues 97–191; the sequence is KPPYSYIALI…DNGSFLRRRK (95 aa).

In terms of tissue distribution, expression begins in the newly forming dorsal mesoderm and is maintained during gastrulation at the dorsal blastopore lip (Spemann organizer). At the early neurula stages, expressed in a row of cells along the dorsal midline that are destined to become the fllor plate of the neural tube. At late neurula, expressed within the anterior and posterior poles of the embryo. After neural closure, expression is detected only in the tailtip, the otic vesicle and at the midbrain/hindbrain boundary.

It localises to the nucleus. In terms of biological role, transcriptional repressor. The sequence is that of Forkhead box protein D5 from Xenopus tropicalis (Western clawed frog).